The primary structure comprises 306 residues: Porphobilinogen deaminase (306 aa).

Cys239 carries the post-translational modification S-(dipyrrolylmethanemethyl)cysteine.

Belongs to the HMBS family. As to quaternary structure, monomer. Dipyrromethane serves as cofactor.

It catalyses the reaction 4 porphobilinogen + H2O = hydroxymethylbilane + 4 NH4(+). It participates in porphyrin-containing compound metabolism; protoporphyrin-IX biosynthesis; coproporphyrinogen-III from 5-aminolevulinate: step 2/4. Tetrapolymerization of the monopyrrole PBG into the hydroxymethylbilane pre-uroporphyrinogen in several discrete steps. The chain is Porphobilinogen deaminase from Helicobacter pylori (strain G27).